Here is a 66-residue protein sequence, read N- to C-terminus: Large ribosomal subunit protein bL35 (66 aa).

Positions 1-16 (MPKQKTHRASAKRFKR) are enriched in basic residues. The disordered stretch occupies residues 1 to 21 (MPKQKTHRASAKRFKRTGSGG).

The protein belongs to the bacterial ribosomal protein bL35 family.

This Streptococcus mutans serotype c (strain ATCC 700610 / UA159) protein is Large ribosomal subunit protein bL35.